A 340-amino-acid polypeptide reads, in one-letter code: Lipase chaperone (340 aa).

Residues 4 to 24 (ILLLIPLAFAASLAWFVWLEP) form a helical membrane-spanning segment. The disordered stretch occupies residues 29-51 (ETAPPASPQAGADRAPPAASAGE). Positions 36 to 51 (PQAGADRAPPAASAGE) are enriched in low complexity.

This sequence belongs to the lipase chaperone family.

It is found in the cell inner membrane. Functionally, may be involved in the folding of the extracellular lipase during its passage through the periplasm. In Pseudomonas aeruginosa (strain ATCC 15692 / DSM 22644 / CIP 104116 / JCM 14847 / LMG 12228 / 1C / PRS 101 / PAO1), this protein is Lipase chaperone (lifO).